Reading from the N-terminus, the 73-residue chain is Toxin Td12 (73 aa).

An N-terminal signal peptide occupies residues 1 to 7 (IGMVIEC). An LCN-type CS-alpha/beta domain is found at 8 to 70 (KDGYLMEPNG…TWDRATNTCG (63 aa)). 4 cysteine pairs are disulfide-bonded: cysteine 18–cysteine 69, cysteine 22–cysteine 44, cysteine 30–cysteine 50, and cysteine 34–cysteine 52. Residue arginine 71 is modified to Arginine amide.

This sequence belongs to the long (4 C-C) scorpion toxin superfamily. Sodium channel inhibitor family. Beta subfamily. Expressed by the venom gland.

Its subcellular location is the secreted. Functionally, beta toxins bind voltage-independently at site-4 of sodium channels (Nav) and shift the voltage of activation toward more negative potentials thereby affecting sodium channel activation and promoting spontaneous and repetitive firing. This Tityus discrepans (Venezuelan scorpion) protein is Toxin Td12.